Reading from the N-terminus, the 390-residue chain is Chorismate synthase 1 (390 aa).

Arg-39 and Arg-45 together coordinate NADP(+). The interval 95-117 (EQEEKEMKRKVTKPRPGHADLNG) is disordered. FMN contacts are provided by residues 132 to 134 (RSS), 253 to 254 (NA), Gly-298, 313 to 317 (KPIPT), and Arg-339.

It belongs to the chorismate synthase family. As to quaternary structure, homotetramer. Requires FMNH2 as cofactor.

It catalyses the reaction 5-O-(1-carboxyvinyl)-3-phosphoshikimate = chorismate + phosphate. It functions in the pathway metabolic intermediate biosynthesis; chorismate biosynthesis; chorismate from D-erythrose 4-phosphate and phosphoenolpyruvate: step 7/7. Its function is as follows. Catalyzes the anti-1,4-elimination of the C-3 phosphate and the C-6 proR hydrogen from 5-enolpyruvylshikimate-3-phosphate (EPSP) to yield chorismate, which is the branch point compound that serves as the starting substrate for the three terminal pathways of aromatic amino acid biosynthesis. This reaction introduces a second double bond into the aromatic ring system. This chain is Chorismate synthase 1, found in Bacillus cereus (strain ATCC 14579 / DSM 31 / CCUG 7414 / JCM 2152 / NBRC 15305 / NCIMB 9373 / NCTC 2599 / NRRL B-3711).